Consider the following 851-residue polypeptide: Protein translocase subunit SecA (851 aa).

Residues Gln-88, 106-110, and Asp-496 contribute to the ATP site; that span reads GEGKT. The Zn(2+) site is built by Cys-828, Cys-830, Cys-839, and His-840.

Belongs to the SecA family. As to quaternary structure, monomer and homodimer. Part of the essential Sec protein translocation apparatus which comprises SecA, SecYEG and auxiliary proteins SecDF-YajC and YidC. Zn(2+) is required as a cofactor.

It is found in the cell inner membrane. The protein localises to the cytoplasm. It carries out the reaction ATP + H2O + cellular proteinSide 1 = ADP + phosphate + cellular proteinSide 2.. In terms of biological role, part of the Sec protein translocase complex. Interacts with the SecYEG preprotein conducting channel. Has a central role in coupling the hydrolysis of ATP to the transfer of proteins into and across the cell membrane, serving as an ATP-driven molecular motor driving the stepwise translocation of polypeptide chains across the membrane. The sequence is that of Protein translocase subunit SecA from Helicobacter hepaticus (strain ATCC 51449 / 3B1).